Here is a 23-residue protein sequence, read N- to C-terminus: Aurein-4.2 (23 aa).

It belongs to the frog skin active peptide (FSAP) family. Aurein subfamily. In terms of tissue distribution, expressed by the skin dorsal glands.

It localises to the secreted. In terms of biological role, has no antimicrobial or anticancer activity. The protein is Aurein-4.2 of Ranoidea aurea (Green and golden bell frog).